We begin with the raw amino-acid sequence, 810 residues long: Glycerol-3-phosphate acyltransferase (810 aa).

The short motif at 305–310 (CHRSHI) is the HXXXXD motif element.

Belongs to the GPAT/DAPAT family.

Its subcellular location is the cell inner membrane. The catalysed reaction is sn-glycerol 3-phosphate + an acyl-CoA = a 1-acyl-sn-glycero-3-phosphate + CoA. The protein operates within phospholipid metabolism; CDP-diacylglycerol biosynthesis; CDP-diacylglycerol from sn-glycerol 3-phosphate: step 1/3. This Haemophilus influenzae (strain PittEE) protein is Glycerol-3-phosphate acyltransferase.